Consider the following 176-residue polypeptide: ATP-dependent protease subunit HslV (176 aa).

Residue Thr5 is part of the active site. Na(+) is bound by residues Ser161, Cys164, and Thr167.

This sequence belongs to the peptidase T1B family. HslV subfamily. A double ring-shaped homohexamer of HslV is capped on each side by a ring-shaped HslU homohexamer. The assembly of the HslU/HslV complex is dependent on binding of ATP.

The protein resides in the cytoplasm. The catalysed reaction is ATP-dependent cleavage of peptide bonds with broad specificity.. Its activity is regulated as follows. Allosterically activated by HslU binding. Its function is as follows. Protease subunit of a proteasome-like degradation complex believed to be a general protein degrading machinery. This is ATP-dependent protease subunit HslV from Thermoanaerobacter sp. (strain X514).